We begin with the raw amino-acid sequence, 45 residues long: Large ribosomal subunit protein bL34 (45 aa).

Residues M1–V45 form a disordered region. The span at S10 to V45 shows a compositional bias: basic residues.

This sequence belongs to the bacterial ribosomal protein bL34 family.

The sequence is that of Large ribosomal subunit protein bL34 from Prochlorococcus marinus (strain NATL2A).